Here is a 368-residue protein sequence, read N- to C-terminus: uncharacterized protein (368 aa).

It belongs to the CdaR family.

This is an uncharacterized protein from Haemophilus influenzae (strain ATCC 51907 / DSM 11121 / KW20 / Rd).